Consider the following 207-residue polypeptide: Large ribosomal subunit protein uL3c (207 aa).

Residues 129-148 are disordered; the sequence is TRGPMTHGSKNHRAPGSIGM.

Belongs to the universal ribosomal protein uL3 family. As to quaternary structure, part of the 50S ribosomal subunit.

The protein localises to the plastid. Its subcellular location is the chloroplast. Functionally, one of the primary rRNA binding proteins, it binds directly near the 3'-end of the 23S rRNA, where it nucleates assembly of the 50S subunit. This is Large ribosomal subunit protein uL3c (rpl3) from Phaeodactylum tricornutum (strain CCAP 1055/1).